The following is a 1013-amino-acid chain: Chitin synthase A (1013 aa).

An N-linked (GlcNAc...) asparagine glycan is attached at Asn-10. Disordered regions lie at residues 26-83 (RYSY…AADW) and 95-218 (ERAD…RRGV). Positions 64 to 81 (TASRPASPARPWSPTRAA) are enriched in low complexity. The segment covering 154–173 (TISSRHGPQGSVQSFTSEST) has biased composition (polar residues). Asn-194 and Asn-316 each carry an N-linked (GlcNAc...) asparagine glycan. 5 consecutive transmembrane segments (helical) span residues 646–666 (LLQL…FFFI), 686–706 (IFIV…IFSM), 721–741 (MIVY…LIVL), 759–779 (LFVN…FTSF), and 792–811 (AQYF…YAFC). Asn-837 carries an N-linked (GlcNAc...) asparagine glycan. A run of 2 helical transmembrane segments spans residues 892 to 912 (VSVW…VYGV) and 919 to 939 (VYLA…AIGS). N-linked (GlcNAc...) asparagine glycans are attached at residues Asn-967, Asn-980, Asn-989, and Asn-995.

This sequence belongs to the chitin synthase family. Class II subfamily. In terms of tissue distribution, mainly expressed in the metulae, phialides, and conidia.

The protein resides in the cell membrane. It is found in the cell septum. The catalysed reaction is [(1-&gt;4)-N-acetyl-beta-D-glucosaminyl](n) + UDP-N-acetyl-alpha-D-glucosamine = [(1-&gt;4)-N-acetyl-beta-D-glucosaminyl](n+1) + UDP + H(+). Polymerizes chitin, a structural polymer of the cell wall and septum, by transferring the sugar moiety of UDP-GlcNAc to the non-reducing end of the growing chitin polymer. Seems not to be involved in hyphal growth, but, with chsC, chsA shares critical functions in hyphal wall integrity and differentiation. ChsA and chsC share also overlapping roles in septum formation. Invoved in the production of the asexual spores (conidia) that are formed by differentiated aerial hyphae called conidiophores. This chain is Chitin synthase A, found in Emericella nidulans (strain FGSC A4 / ATCC 38163 / CBS 112.46 / NRRL 194 / M139) (Aspergillus nidulans).